Here is an 871-residue protein sequence, read N- to C-terminus: MADPGDGPRAAPGEVAEPPGDESGTSGGEAFPLSSLANLFEGEEGSSSLSPVDASRPAGPGDGRPNLRMKFQGAFRKGVPNPIDLLESTLYESSVVPGPKKAPMDSLFDYGTYRHHPSDNKRWRRKVVEKQPQSPKAPAPQPPPILKVFNRPILFDIVSRGSTADLDGLLSFLLTHKKRLTDEEFREPSTGKTCLPKALLNLSNGRNDTIPVLLDIAERTGNMREFINSPFRDIYYRGQTSLHIAIERRCKHYVELLVAQGADVHAQARGRFFQPKDEGGYFYFGELPLSLAACTNQPHIVNYLTENPHKKADMRRQDSRGNTVLHALVAIADNTRENTKFVTKMYDLLLLKCSRLFPDSNLETVLNNDGLSPLMMAAKTGKIGVFQHIIRREVTDEDTRHLSRKFKDWAYGPVYSSLYDLSSLDTCGEEVSVLEILVYNSKIENRHEMLAVEPINELLRDKWRKFGAVSFYINVVSYLCAMVIFTLTAYYQPLEGTPPYPYRTTVDYLRLAGEVITLFTGVLFFFTSIKDLFTKKCPGVNSLFVDGSFQLLYFIYSVLVVVSAALYLAGIEAYLAVMVFALVLGWMNALYFTRGLKLTGTYSIMIQKILFKDLFRFLLVYLLFMIGYASALVTLLNPCTNMKVCDEDQSNCTVPTYPACRDSETFSAFLLDLFKLTIGMGDLEMLSSAKYPVVFILLLVTYIILTFVLLLNMLIALMGETVGQVSKESKHIWKLQWATTILDIERSFPVFLRKAFRSGEMVTVGKSSDGTPDRRWCFRVDEVNWSHWNQNLGIINEDPGKSEIYQYYGFSHTVGRLRRDRWSSVVPRVVELNKNSSADEVVVPLDNLGNPNCDGHQQGYAPKWRTDDAPL.

2 disordered regions span residues 1-68 and 110-143; these read MADP…PNLR and YGTY…PQPP. Topologically, residues 1 to 469 are cytoplasmic; it reads MADPGDGPRA…RDKWRKFGAV (469 aa). Tyrosine 110 carries the post-translational modification Phosphotyrosine; by SRC-type Tyr-kinases. The span at 116–129 shows a compositional bias: basic and acidic residues; it reads HPSDNKRWRRKVVE. ATP-binding positions include lysine 192, lysine 197, asparagine 201, 236 to 239, and arginine 248; that span reads YRGQ. ANK repeat units lie at residues 237-266 and 284-313; these read RGQT…DVHA and FGEL…KKAD. Position 249–251 (249–251) interacts with a 1,2-diacyl-sn-glycero-3-phospho-(1D-myo-inositol-4,5-bisphosphate); sequence RCK. The residue at position 253 (tyrosine 253) is a Phosphotyrosine; by LYN. A 1,2-diacyl-sn-glycero-3-phospho-(1D-myo-inositol-4,5-bisphosphate) contacts are provided by residues 296–299 and lysine 344; that span reads NQPH. Residues 369 to 398 form an ANK 3 repeat; it reads DGLSPLMMAAKTGKIGVFQHIIRREVTDED. A helical transmembrane segment spans residues 470–490; sequence SFYINVVSYLCAMVIFTLTAY. Topologically, residues 491–507 are extracellular; the sequence is YQPLEGTPPYPYRTTVD. The chain crosses the membrane as a helical span at residues 508 to 534; it reads YLRLAGEVITLFTGVLFFFTSIKDLFT. Residues 535-547 lie on the Cytoplasmic side of the membrane; that stretch reads KKCPGVNSLFVDG. The chain crosses the membrane as a helical span at residues 548–568; it reads SFQLLYFIYSVLVVVSAALYL. Topologically, residues 569–572 are extracellular; that stretch reads AGIE. The helical transmembrane segment at 573-593 threads the bilayer; the sequence is AYLAVMVFALVLGWMNALYFT. The Cytoplasmic segment spans residues 594–608; sequence RGLKLTGTYSIMIQK. Residues 609 to 636 form a helical membrane-spanning segment; sequence ILFKDLFRFLLVYLLFMIGYASALVTLL. At 637–665 the chain is on the extracellular side; that stretch reads NPCTNMKVCDEDQSNCTVPTYPACRDSET. N-linked (GlcNAc...) asparagine glycosylation occurs at asparagine 651. The pore-forming intramembrane region spans 666 to 685; the sequence is FSAFLLDLFKLTIGMGDLEM. Positions 679 to 682 match the Selectivity filter motif; it reads GMGD. Aspartate 682 contacts Ca(2+). The Extracellular portion of the chain corresponds to 686–693; it reads LSSAKYPV. The chain crosses the membrane as a helical span at residues 694-722; sequence VFILLLVTYIILTFVLLLNMLIALMGETV. Topologically, residues 723-871 are cytoplasmic; that stretch reads GQVSKESKHI…PKWRTDDAPL (149 aa). Tyrosine 805 is modified (phosphotyrosine; by SRC-type Tyr-kinases). The tract at residues 812–831 is interaction with calmodulin and ITPR3; the sequence is HTVGRLRRDRWSSVVPRVVE. A Phosphoserine; by PKC and PKA modification is found at serine 824. Positions 850 to 871 are disordered; the sequence is NPNCDGHQQGYAPKWRTDDAPL.

It belongs to the transient receptor (TC 1.A.4) family. TrpV subfamily. TRPV4 sub-subfamily. As to quaternary structure, homotetramer. Interacts with calmodulin. Interacts with CTNNB1. The TRPV4 and CTNNB1 complex can interact with CDH1. Part of a complex containing MLC1, AQP4, HEPACAM and ATP1B1. Interacts with MAP7 and Src family Tyr protein kinases LYN, SRC, FYN, HCK, LCK and YES. Interacts with PACSIN1, PACSIN2 and PACSIN3 (via SH3 domain). Interacts with ITPR3. Interacts with AQP5; the interaction is probably indirect and regulates TRPV4 activation by hypotonicity. Interacts with ANO1. Interacts (via C-terminus) with PKD2 (via C-terminus). Interacts with DDX3X; this interaction is decreased when the channel is activated. N-glycosylated. In terms of tissue distribution, detected in liver, kidney, heart, brain cortex, cerebellum and brainstem (at protein level). Expressed in salivary glands (at protein level). Expressed in heart, lung, spleen, liver, kidney, brain, skeletal muscle and testis. In the central nervous system, expressed in the lamina terminalis (arched vascular organ and neurons of the subfornical organ), median preoptic area, ventral hippocampal commissure, and ependymal cells of the choroid plexus. In the cochlea, expressed in both inner and outer hair cells, and in marginal cells of the cochlear stria vascularis. Expressed in large neurons of the trigeminal ganglion. In the kidney cortex, strongly expressed by epithelial cells of tubules and much weaker in glomeruli.

Its subcellular location is the cell membrane. It is found in the apical cell membrane. The protein resides in the cell junction. The protein localises to the adherens junction. It localises to the cell projection. Its subcellular location is the cilium. The enzyme catalyses Ca(2+)(in) = Ca(2+)(out). Non-selective calcium permeant cation channel involved in osmotic sensitivity and mechanosensitivity. Activation by exposure to hypotonicity within the physiological range exhibits an outward rectification. Also activated by heat, low pH, citrate and phorbol esters. Increase of intracellular Ca(2+) potentiates currents. Channel activity seems to be regulated by a calmodulin-dependent mechanism with a negative feedback mechanism. Acts as a regulator of intracellular Ca(2+) in synoviocytes. Plays an obligatory role as a molecular component in the nonselective cation channel activation induced by 4-alpha-phorbol 12,13-didecanoate and hypotonic stimulation in synoviocytes and also regulates production of IL-8. Together with PKD2, forms mechano- and thermosensitive channels in cilium. Promotes cell-cell junction formation in skin keratinocytes and plays an important role in the formation and/or maintenance of functional intercellular barriers. Negatively regulates expression of PPARGC1A, UCP1, oxidative metabolism and respiration in adipocytes. Regulates expression of chemokines and cytokines related to pro-inflammatory pathway in adipocytes. Together with AQP5, controls regulatory volume decrease in salivary epithelial cells. Required for normal development and maintenance of bone and cartilage. In its inactive state, may sequester DDX3X at the plasma membrane. When activated, the interaction between both proteins is affected and DDX3X relocalizes to the nucleus. In neurons of the central nervous system, could play a role in triggering voluntary water intake in response to increased sodium concentration in body fluid. The sequence is that of Transient receptor potential cation channel subfamily V member 4 (Trpv4) from Mus musculus (Mouse).